The sequence spans 300 residues: NAD kinase (300 aa).

Catalysis depends on Asp-75, which acts as the Proton acceptor. Residues 75 to 76, 149 to 150, Arg-177, Asp-179, 190 to 195, Ala-214, and Gln-248 each bind NAD(+); these read DG, ND, and TAYALS.

Belongs to the NAD kinase family. A divalent metal cation serves as cofactor.

It is found in the cytoplasm. The enzyme catalyses NAD(+) + ATP = ADP + NADP(+) + H(+). Its function is as follows. Involved in the regulation of the intracellular balance of NAD and NADP, and is a key enzyme in the biosynthesis of NADP. Catalyzes specifically the phosphorylation on 2'-hydroxyl of the adenosine moiety of NAD to yield NADP. This is NAD kinase from Burkholderia cenocepacia (strain HI2424).